Reading from the N-terminus, the 484-residue chain is Glutamyl-tRNA(Gln) amidotransferase subunit B, mitochondrial (484 aa).

The protein belongs to the GatB/GatE family. GatB subfamily. In terms of assembly, subunit of the heterotrimeric GatFAB amidotransferase (AdT) complex, composed of A, B and F subunits.

It localises to the mitochondrion. It catalyses the reaction L-glutamyl-tRNA(Gln) + L-glutamine + ATP + H2O = L-glutaminyl-tRNA(Gln) + L-glutamate + ADP + phosphate + H(+). In terms of biological role, allows the formation of correctly charged Gln-tRNA(Gln) through the transamidation of misacylated Glu-tRNA(Gln) in the mitochondria. The reaction takes place in the presence of glutamine and ATP through an activated gamma-phospho-Glu-tRNA(Gln). The chain is Glutamyl-tRNA(Gln) amidotransferase subunit B, mitochondrial from Candida tropicalis (strain ATCC MYA-3404 / T1) (Yeast).